The sequence spans 98 residues: Integration host factor subunit beta (98 aa).

Belongs to the bacterial histone-like protein family. As to quaternary structure, heterodimer of an alpha and a beta chain.

Its function is as follows. This protein is one of the two subunits of integration host factor, a specific DNA-binding protein that functions in genetic recombination as well as in transcriptional and translational control. In Pseudomonas putida (strain GB-1), this protein is Integration host factor subunit beta.